Consider the following 225-residue polypeptide: Nuclear protein UL4 homolog (225 aa).

This sequence belongs to the alphaherpesvirinae HHV-1 UL4 family.

Its subcellular location is the host nucleus. The chain is Nuclear protein UL4 homolog from Equus caballus (Horse).